The following is an 81-amino-acid chain: Sulfur carrier protein TusA (81 aa).

Catalysis depends on Cys-19, which acts as the Cysteine persulfide intermediate.

The protein belongs to the sulfur carrier protein TusA family.

Its subcellular location is the cytoplasm. In terms of biological role, sulfur carrier protein which probably makes part of a sulfur-relay system. This Shewanella frigidimarina (strain NCIMB 400) protein is Sulfur carrier protein TusA.